The sequence spans 130 residues: Small ribosomal subunit protein uS8 (130 aa).

Belongs to the universal ribosomal protein uS8 family. In terms of assembly, part of the 30S ribosomal subunit. Contacts proteins S5 and S12.

Its function is as follows. One of the primary rRNA binding proteins, it binds directly to 16S rRNA central domain where it helps coordinate assembly of the platform of the 30S subunit. The chain is Small ribosomal subunit protein uS8 from Aliivibrio salmonicida (strain LFI1238) (Vibrio salmonicida (strain LFI1238)).